The sequence spans 98 residues: Large ribosomal subunit protein eL21 (98 aa).

The disordered stretch occupies residues 1-24 (MVKMSHGPRSGSRRKLTKSAEERK).

Belongs to the eukaryotic ribosomal protein eL21 family.

The protein is Large ribosomal subunit protein eL21 (rpl21e) of Thermoplasma acidophilum (strain ATCC 25905 / DSM 1728 / JCM 9062 / NBRC 15155 / AMRC-C165).